The primary structure comprises 178 residues: MSRIGKKPVAIPSGIEVKVDGNVLKFKKGNAQKELDTKNHVDVKVEDGKVEFSPKGEDRQSMAFWGTYRALAHNIVVGLTDGFSKQLEINGVGYKAAMKGKILELTLGYSHLVNYEVPDGIEISVDKNVITIKGTDKQQVGQVAAIIRDFRAPEPYKGKGVKYLEEHIIRKAGKTAKK.

It belongs to the universal ribosomal protein uL6 family. As to quaternary structure, part of the 50S ribosomal subunit.

In terms of biological role, this protein binds to the 23S rRNA, and is important in its secondary structure. It is located near the subunit interface in the base of the L7/L12 stalk, and near the tRNA binding site of the peptidyltransferase center. In Campylobacter hominis (strain ATCC BAA-381 / DSM 21671 / CCUG 45161 / LMG 19568 / NCTC 13146 / CH001A), this protein is Large ribosomal subunit protein uL6.